The sequence spans 417 residues: MLEQMGQAAKAASYQLSVLSTAEKNQLLMTIADRLEAQSAEILAANQQDLADARQNGMSAALLDRLMLDRQRLKGIADDVRQVCRLADPVGVVIDGGKLDSGLRIERRRVPLGVVGVIYEARPNVTVDVASLCLKTGNAVILRGGKETYRTNAATVRVIQDALKRHGVPAAAVQAIESPDRELVNQLLKLDRYVDMLIPRGGAGLHKLCREQSTIPVITGGIGVCHIYVDRSIEQEAALKVIVNAKKQRPSACNSVETLLIDAAIADSFLPALSARMAQEGISLHADARSLPLLQQGPACVSAVTDAQYRDEWLALDLNVKLVDDLSEGIAHIREYGTQHSDAILTRTIKHADRFVNEVDSSAVYVNASTRFTDGGQFGLGAEVAVSTQKLHARGPMGLEALTTYKWVAFGDDTVRD.

This sequence belongs to the gamma-glutamyl phosphate reductase family.

The protein localises to the cytoplasm. It carries out the reaction L-glutamate 5-semialdehyde + phosphate + NADP(+) = L-glutamyl 5-phosphate + NADPH + H(+). Its pathway is amino-acid biosynthesis; L-proline biosynthesis; L-glutamate 5-semialdehyde from L-glutamate: step 2/2. Functionally, catalyzes the NADPH-dependent reduction of L-glutamate 5-phosphate into L-glutamate 5-semialdehyde and phosphate. The product spontaneously undergoes cyclization to form 1-pyrroline-5-carboxylate. This is Gamma-glutamyl phosphate reductase from Erwinia tasmaniensis (strain DSM 17950 / CFBP 7177 / CIP 109463 / NCPPB 4357 / Et1/99).